The primary structure comprises 171 residues: Phosphopantetheine adenylyltransferase (171 aa).

Threonine 9 contributes to the substrate binding site. Residues 9–10 (TF) and histidine 17 each bind ATP. Lysine 41, leucine 73, and arginine 87 together coordinate substrate. Residues 88-90 (GLR), glutamate 98, and 123-129 (YQFISGT) contribute to the ATP site.

This sequence belongs to the bacterial CoaD family. As to quaternary structure, homohexamer. The cofactor is Mg(2+).

It localises to the cytoplasm. The enzyme catalyses (R)-4'-phosphopantetheine + ATP + H(+) = 3'-dephospho-CoA + diphosphate. Its pathway is cofactor biosynthesis; coenzyme A biosynthesis; CoA from (R)-pantothenate: step 4/5. Functionally, reversibly transfers an adenylyl group from ATP to 4'-phosphopantetheine, yielding dephospho-CoA (dPCoA) and pyrophosphate. This is Phosphopantetheine adenylyltransferase from Paraburkholderia phytofirmans (strain DSM 17436 / LMG 22146 / PsJN) (Burkholderia phytofirmans).